The sequence spans 95 residues: Co-chaperonin GroES (95 aa).

Belongs to the GroES chaperonin family. Heptamer of 7 subunits arranged in a ring. Interacts with the chaperonin GroEL.

The protein resides in the cytoplasm. Together with the chaperonin GroEL, plays an essential role in assisting protein folding. The GroEL-GroES system forms a nano-cage that allows encapsulation of the non-native substrate proteins and provides a physical environment optimized to promote and accelerate protein folding. GroES binds to the apical surface of the GroEL ring, thereby capping the opening of the GroEL channel. This chain is Co-chaperonin GroES, found in Rickettsia conorii (strain ATCC VR-613 / Malish 7).